The following is a 314-amino-acid chain: MSWCDGSDDNYDLNLERVSNTDHPSVQLKDQSQSCVTSRPDSKISAETPITTCPSCGHKLHHHQDDQVGSIKDLPSLPAGVKFDPSDKEILMHLEAKVSSDKRKLHPLIDEFIPTLEGENGICYTHPEKLPGVSKDGQVRHFFHRPSKAYTTGTRKRRKVSTDEEGHETRWHKTGKTRPVLSQSGETGFKKILVLYTNYGRQKKPEKTNWVMHQYHLGSSEDEKDGEPVLSKVFYQTQPRQCGSMEPKPKNLVNLNRFSYENIQAGFGYEHGGKSEETTQVIRELVVREGDGSCSFLSFTCDASKGKESFMKNQ.

Residues 18–39 (VSNTDHPSVQLKDQSQSCVTSR) are compositionally biased toward polar residues. 2 disordered regions span residues 18 to 48 (VSNT…SAET) and 150 to 182 (YTTG…PVLS). The NAC domain occupies 77–236 (LPAGVKFDPS…EPVLSKVFYQ (160 aa)). Positions 160 to 171 (VSTDEEGHETRW) are enriched in basic and acidic residues. The DNA-binding element occupies 187–242 (TGFKKILVLYTNYGRQKKPEKTNWVMHQYHLGSSEDEKDGEPVLSKVFYQTQPRQC).

Expressed in protoxylem and elongating interfascicular fiber cells of elongating internodes, developing metaxylem cells and interfascicular fibers of non-elongating internodes and developing secondary xylem of roots.

Its subcellular location is the nucleus. Its function is as follows. Transcriptional activator that plays a regulatory role in the development of secondary cell wall fibers. Is a direct target of SND1. The sequence is that of NAC domain-containing protein 10 from Arabidopsis thaliana (Mouse-ear cress).